The primary structure comprises 682 residues: Tail-specific protease (682 aa).

A signal peptide spans 1 to 22 (MNMFFRLTALAGLLAIAGQTFA). Residues 238–322 (NTEMSLSLEG…SKVRLEILPA (85 aa)) form the PDZ domain. Active-site charge relay system residues include serine 452, aspartate 463, and lysine 477. A compositionally biased stretch (basic and acidic residues) spans 635-650 (GKPELKKLDDLPKDYQ). The disordered stretch occupies residues 635 to 654 (GKPELKKLDDLPKDYQEPDP).

The protein belongs to the peptidase S41A family.

It localises to the cell inner membrane. It catalyses the reaction The enzyme shows specific recognition of a C-terminal tripeptide, Xaa-Yaa-Zaa, in which Xaa is preferably Ala or Leu, Yaa is preferably Ala or Tyr, and Zaa is preferably Ala, but then cleaves at a variable distance from the C-terminus. A typical cleavage is -Ala-Ala-|-Arg-Ala-Ala-Lys-Glu-Asn-Tyr-Ala-Leu-Ala-Ala.. Its function is as follows. Involved in the cleavage of a C-terminal peptide of 11 residues from the precursor form of penicillin-binding protein 3 (PBP3). May be involved in protection of the bacterium from thermal and osmotic stresses. The protein is Tail-specific protease (prc) of Escherichia coli (strain K12).